The primary structure comprises 226 residues: Pyridoxal 5'-phosphate synthase subunit Pdx2 (226 aa).

An L-glutamine-binding site is contributed by 52 to 54 (GES). Residue cysteine 87 is the Nucleophile of the active site. Residues arginine 124 and 156–157 (IR) contribute to the L-glutamine site. Residues histidine 199 and glutamate 201 each act as charge relay system in the active site.

The protein belongs to the glutaminase PdxT/SNO family. In the presence of PdxS, forms a dodecamer of heterodimers. Only shows activity in the heterodimer.

The enzyme catalyses aldehydo-D-ribose 5-phosphate + D-glyceraldehyde 3-phosphate + L-glutamine = pyridoxal 5'-phosphate + L-glutamate + phosphate + 3 H2O + H(+). The catalysed reaction is L-glutamine + H2O = L-glutamate + NH4(+). It participates in cofactor biosynthesis; pyridoxal 5'-phosphate biosynthesis. Functionally, catalyzes the hydrolysis of glutamine to glutamate and ammonia as part of the biosynthesis of pyridoxal 5'-phosphate. The resulting ammonia molecule is channeled to the active site of PdxS. The sequence is that of Pyridoxal 5'-phosphate synthase subunit Pdx2 from Plasmodium berghei.